The primary structure comprises 196 residues: dITP/XTP pyrophosphatase (196 aa).

7–12 (THNPGK) provides a ligand contact to substrate. Mg(2+) contacts are provided by Asp40 and Asp69. Asp69 acts as the Proton acceptor in catalysis. Residues Ser70, 150-153 (FGYD), Lys173, and 178-179 (HR) contribute to the substrate site.

Belongs to the HAM1 NTPase family. As to quaternary structure, homodimer. Requires Mg(2+) as cofactor.

The enzyme catalyses XTP + H2O = XMP + diphosphate + H(+). The catalysed reaction is dITP + H2O = dIMP + diphosphate + H(+). It carries out the reaction ITP + H2O = IMP + diphosphate + H(+). Its function is as follows. Pyrophosphatase that catalyzes the hydrolysis of nucleoside triphosphates to their monophosphate derivatives, with a high preference for the non-canonical purine nucleotides XTP (xanthosine triphosphate), dITP (deoxyinosine triphosphate) and ITP. Seems to function as a house-cleaning enzyme that removes non-canonical purine nucleotides from the nucleotide pool, thus preventing their incorporation into DNA/RNA and avoiding chromosomal lesions. This Exiguobacterium sp. (strain ATCC BAA-1283 / AT1b) protein is dITP/XTP pyrophosphatase.